We begin with the raw amino-acid sequence, 795 residues long: MKFSELWLREWVNPAIDSDALANQITMAGLEVDGVEPVAGSFHGVVVGEVVECAQHPNADKLRVTKVNVGGDRLLDIVCGAPNCRQGLRVAVATIGAVLPGDFKIKAAKLRGEPSEGMLCSFSELGISDDHSGIIELPADAPIGTDIREYLKLDDNTIEISVTPNRADCLGIIGVARDVAVLNQLPLVEPEIVPVGATIDDTLPITVEAPEACPRYLGRVVKGINVKAPTPLWMKEKLRRCGIRSIDAVVDVTNYVLLELGQPMHAFDKDRIEGGIVVRMAKEGETLVLLDGTEAKLNADTLVIADHNKALAMGGIFGGEHSGVNDETQNVLLECAFFSPLSITGRARRHGLHTDASHRYERGVDPALQHKAMERATRLLIDICGGEAGPVIDITNEATLPKRATITLRRSKLDRLIGHHIADEQVTDILRRLGCEVTEGKDEWQAVAPSWRFDMEIEEDLVEEVARVYGYNNIPDEPVQASLIMGTHREADLSLKRVKTLLNDKGYQEVITYSFVDPKVQQMIHPGVEALLLPSPISVEMSAMRLSLWTGLLATVVYNQNRQQNRVRIFESGLRFVPDTQAPLGIRQDLMLAGVICGNRYEEHWNLAKETVDFYDLKGDLESVLDLTGKLNEVEFRAEANPALHPGQSAAIYLKGERIGFVGVVHPELERKLDLNGRTLVFELEWNKLADRVVPQAREISRFPANRRDIAVVVAENVPAADILSECKKVGVNQVVGVNLFDVYRGKGVAEGYKSLAISLILQDTSRTLEEEEIAATVAKCVEALKERFQASLRD.

The 110-residue stretch at 39–148 (AGSFHGVVVG…ADAPIGTDIR (110 aa)) folds into the tRNA-binding domain. Residues 401-476 (PKRATITLRR…RVYGYNNIPD (76 aa)) enclose the B5 domain. Residues D454, D460, E463, and E464 each coordinate Mg(2+). The 94-residue stretch at 701–794 (SRFPANRRDI…LKERFQASLR (94 aa)) folds into the FDX-ACB domain.

This sequence belongs to the phenylalanyl-tRNA synthetase beta subunit family. Type 1 subfamily. Tetramer of two alpha and two beta subunits. It depends on Mg(2+) as a cofactor.

It is found in the cytoplasm. The catalysed reaction is tRNA(Phe) + L-phenylalanine + ATP = L-phenylalanyl-tRNA(Phe) + AMP + diphosphate + H(+). This is Phenylalanine--tRNA ligase beta subunit from Shigella sonnei (strain Ss046).